The chain runs to 216 residues: uncharacterized protein (216 aa).

Residues Leu-8–Leu-63 form the HTH cro/C1-type domain. A DNA-binding region (H-T-H motif) is located at residues Ala-19 to Thr-38.

This is an uncharacterized protein from Coxiella burnetii (strain RSA 493 / Nine Mile phase I).